The following is a 449-amino-acid chain: 4-aminobutyrate aminotransferase (449 aa).

Position 294 is an N6-(pyridoxal phosphate)lysine (Lys294).

Belongs to the class-III pyridoxal-phosphate-dependent aminotransferase family. Pyridoxal 5'-phosphate is required as a cofactor.

It catalyses the reaction 4-aminobutanoate + 2-oxoglutarate = succinate semialdehyde + L-glutamate. The enzyme catalyses (S)-3-amino-2-methylpropanoate + 2-oxoglutarate = 2-methyl-3-oxopropanoate + L-glutamate. Its pathway is amino-acid degradation; 4-aminobutanoate degradation. In Mycobacterium bovis (strain ATCC BAA-935 / AF2122/97), this protein is 4-aminobutyrate aminotransferase (gabT).